A 418-amino-acid polypeptide reads, in one-letter code: MIFDKDDFKAYDADLWNAIAKEEERQQNNIELIASENVVSKAVMAAQGSILTNKYAEGYPGRRYYGGTDVVDVVETLAIERAKEIFGAKFANVQPHSGSQANCAAYMSLIEPGDTVMGMDLASGGHLTHGAPVSFSGQTYNFVSYSVDPETELLDFDAILKQAQEVKPKLIVAGASAYSQIIDFSKFREIADAVGAKLMVDMAHIAGLVAAGLHPSPVPYAHITTTTTHKTLRGPRGGLILTNDEELAKKINSAIFPGIQGGPLEHVVAAKAVSFKEVLDPAFKEYAANVIKNSKAMADVFLQDPDFRIISGGTENHLFLVDVTKVVENGKVAQNLLDEVNITLNKNSIPYETLSPFKTSGIRIGAAAITARGFGEEESRKVAELIIKTLKNSENEAVLEEVRSAVKELTDAFPLYED.

(6S)-5,6,7,8-tetrahydrofolate contacts are provided by residues Leu121 and 125 to 127; that span reads GHL. Lys230 bears the N6-(pyridoxal phosphate)lysine mark. Residues Glu246 and 355–357 each bind (6S)-5,6,7,8-tetrahydrofolate; that span reads SPF.

Belongs to the SHMT family. Homodimer. Requires pyridoxal 5'-phosphate as cofactor.

It localises to the cytoplasm. The enzyme catalyses (6R)-5,10-methylene-5,6,7,8-tetrahydrofolate + glycine + H2O = (6S)-5,6,7,8-tetrahydrofolate + L-serine. It participates in one-carbon metabolism; tetrahydrofolate interconversion. Its pathway is amino-acid biosynthesis; glycine biosynthesis; glycine from L-serine: step 1/1. Catalyzes the reversible interconversion of serine and glycine with tetrahydrofolate (THF) serving as the one-carbon carrier. This reaction serves as the major source of one-carbon groups required for the biosynthesis of purines, thymidylate, methionine, and other important biomolecules. Also exhibits THF-independent aldolase activity toward beta-hydroxyamino acids, producing glycine and aldehydes, via a retro-aldol mechanism. In Streptococcus pneumoniae (strain Taiwan19F-14), this protein is Serine hydroxymethyltransferase.